A 490-amino-acid chain; its full sequence is Betaine aldehyde dehydrogenase (490 aa).

K(+) is bound at residue D93. Residue 150–152 (GAW) coordinates NAD(+). K162 acts as the Charge relay system in catalysis. 176 to 179 (KPSE) contacts NAD(+). V180 is a K(+) binding site. Residue 230–233 (GIAS) coordinates NAD(+). L246 serves as a coordination point for K(+). Residue E252 is the Proton acceptor of the active site. The NAD(+) site is built by G254, C286, and E387. Catalysis depends on C286, which acts as the Nucleophile. C286 carries the cysteine sulfenic acid (-SOH) modification. K457 and G460 together coordinate K(+). E464 (charge relay system) is an active-site residue.

The protein belongs to the aldehyde dehydrogenase family. Dimer of dimers. Requires K(+) as cofactor.

The catalysed reaction is betaine aldehyde + NAD(+) + H2O = glycine betaine + NADH + 2 H(+). The protein operates within amine and polyamine biosynthesis; betaine biosynthesis via choline pathway; betaine from betaine aldehyde: step 1/1. Involved in the biosynthesis of the osmoprotectant glycine betaine. Catalyzes the irreversible oxidation of betaine aldehyde to the corresponding acid. This is Betaine aldehyde dehydrogenase from Yersinia pestis.